The following is a 218-amino-acid chain: Keratin-associated protein 10-8 (218 aa).

The 16 X 5 AA repeats of C-C-X(3) stretch occupies residues 26-202 (CGNQVSSPSA…FCQPSCCHPA (177 aa)). Repeat copies occupy residues 50 to 54 (CCEPT), 55 to 59 (CCAPS), 60 to 64 (CCAPA), 86 to 90 (CSSSS), 96 to 100 (CCVPV), 101 to 105 (CCRPV), 111 to 115 (CCRPV), 121 to 125 (CCTPV), 131 to 135 (CCRPV), 136 to 140 (CCRPV), 141 to 145 (CCRPV), 151 to 155 (CCRPM), 161 to 167 (PCSAPSS), 168 to 172 (CCRPS), 187 to 191 (CCVPT), and 198 to 202 (CCHPA).

Belongs to the KRTAP type 10 family. Interacts with hair keratins.

In terms of biological role, in the hair cortex, hair keratin intermediate filaments are embedded in an interfilamentous matrix, consisting of hair keratin-associated proteins (KRTAP), which are essential for the formation of a rigid and resistant hair shaft through their extensive disulfide bond cross-linking with abundant cysteine residues of hair keratins. The matrix proteins include the high-sulfur and high-glycine-tyrosine keratins. The chain is Keratin-associated protein 10-8 from Bos taurus (Bovine).